Here is an 834-residue protein sequence, read N- to C-terminus: Probable glucan 1,3-beta-glucosidase D (834 aa).

A compositionally biased stretch (basic and acidic residues) spans 1-33 (MPSHSRSRDRYGGRDSDREARYDYDYARRRYAT). Disordered regions lie at residues 1–188 (MPSH…ASHL) and 200–251 (QYEK…TKAR). At 1–306 (MPSHSRSRDR…GGRPFWKRKK (306 aa)) the chain is on the cytoplasmic side. Positions 34 to 45 (DDNDDDYDDDEL) are enriched in acidic residues. Composition is skewed to basic and acidic residues over residues 46 to 76 (EHGLNERRYRRDGYLPPRESRTRGYYERDAE), 98 to 173 (YGHD…ETAA), 201 to 218 (YEKEERRKRENAKDAAKA), and 228 to 245 (VVGEESRALRDPPGESHR). The helical; Signal-anchor for type II membrane protein transmembrane segment at 307–327 (WIGLGALILILVIVIPVAVVV) threads the bilayer. The Extracellular portion of the chain corresponds to 328 to 834 (SKKHDNKSDP…PDFGNLPEYY (507 aa)). The tract at residues 331–354 (HDNKSDPADPQGTSPGKSNLDGLS) is disordered. N-linked (GlcNAc...) asparagine glycosylation is found at Asn-333, Asn-379, Asn-384, Asn-396, Asn-549, Asn-561, and Asn-570. Residue Glu-600 is the Proton donor of the active site. N-linked (GlcNAc...) asparagine glycosylation is found at Asn-639, Asn-672, and Asn-692. Glu-705 serves as the catalytic Nucleophile.

This sequence belongs to the glycosyl hydrolase 5 (cellulase A) family.

The protein resides in the cell membrane. It carries out the reaction Successive hydrolysis of beta-D-glucose units from the non-reducing ends of (1-&gt;3)-beta-D-glucans, releasing alpha-glucose.. Functionally, glucosidase involved in the degradation of cellulosic biomass. Active on lichenan. The protein is Probable glucan 1,3-beta-glucosidase D (exgD) of Neosartorya fischeri (strain ATCC 1020 / DSM 3700 / CBS 544.65 / FGSC A1164 / JCM 1740 / NRRL 181 / WB 181) (Aspergillus fischerianus).